The sequence spans 358 residues: DNA ligase C (358 aa).

The active-site N6-AMP-lysine intermediate is the Lys-29.

It belongs to the ATP-dependent DNA ligase family. Requires a divalent metal cation as cofactor.

It catalyses the reaction ATP + (deoxyribonucleotide)n-3'-hydroxyl + 5'-phospho-(deoxyribonucleotide)m = (deoxyribonucleotide)n+m + AMP + diphosphate.. DNA ligase that seals nicks in double-stranded DNA during DNA replication, DNA recombination and DNA repair. This is DNA ligase C (ligC) from Mycobacterium tuberculosis (strain ATCC 25618 / H37Rv).